We begin with the raw amino-acid sequence, 640 residues long: UvrABC system protein C (640 aa).

In terms of domain architecture, GIY-YIG spans 22 to 101 (NDPGCYLMKD…IKSHQPYFNV (80 aa)). The region spanning 211 to 246 (DELRILLEKQMISFSESLKFEEAGSVRDQLKGIDRL) is the UVR domain.

The protein belongs to the UvrC family. As to quaternary structure, interacts with UvrB in an incision complex.

It localises to the cytoplasm. The UvrABC repair system catalyzes the recognition and processing of DNA lesions. UvrC both incises the 5' and 3' sides of the lesion. The N-terminal half is responsible for the 3' incision and the C-terminal half is responsible for the 5' incision. This chain is UvrABC system protein C, found in Prochlorococcus marinus (strain NATL2A).